Here is a 192-residue protein sequence, read N- to C-terminus: Anthranilate synthase component 2 (192 aa).

Positions 3–192 constitute a Glutamine amidotransferase type-1 domain; sequence NILLLDNIDS…LQRVIQWTKI (190 aa). 57–59 lines the L-glutamine pocket; that stretch reads GPG. The active-site Nucleophile; for GATase activity is C84. L-glutamine contacts are provided by residues Q88 and 134–135; that span reads SL. Residues H170 and E172 each act as for GATase activity in the active site.

In terms of assembly, heterotetramer consisting of two non-identical subunits: a beta subunit (TrpG) and a large alpha subunit (TrpE).

The enzyme catalyses chorismate + L-glutamine = anthranilate + pyruvate + L-glutamate + H(+). It functions in the pathway amino-acid biosynthesis; L-tryptophan biosynthesis; L-tryptophan from chorismate: step 1/5. In terms of biological role, part of a heterotetrameric complex that catalyzes the two-step biosynthesis of anthranilate, an intermediate in the biosynthesis of L-tryptophan. In the first step, the glutamine-binding beta subunit (TrpG) of anthranilate synthase (AS) provides the glutamine amidotransferase activity which generates ammonia as a substrate that, along with chorismate, is used in the second step, catalyzed by the large alpha subunit of AS (TrpE) to produce anthranilate. In the absence of TrpG, TrpE can synthesize anthranilate directly from chorismate and high concentrations of ammonia. This Buchnera aphidicola subsp. Baizongia pistaciae (strain Bp) protein is Anthranilate synthase component 2 (trpG).